Here is a 245-residue protein sequence, read N- to C-terminus: Dehydrogenase/reductase SDR family member 6 (245 aa).

NAD(+) is bound by residues 16-18 (QGI), aspartate 37, and aspartate 58. Arginine 144 contacts substrate. Tyrosine 147 acts as the Proton acceptor in catalysis. NAD(+) contacts are provided by residues lysine 151 and 180 to 184 (VDTPS). Residues arginine 188 and arginine 205 each contribute to the substrate site.

The protein belongs to the short-chain dehydrogenases/reductases (SDR) family. As to quaternary structure, homotetramer. In terms of tissue distribution, detected in liver, spleen and macrophages. Widely expressed.

Its subcellular location is the cytoplasm. The enzyme catalyses cis-4-hydroxy-L-proline + NAD(+) = 4-oxo-L-proline + NADH + H(+). The catalysed reaction is (R)-3-hydroxybutanoate + NAD(+) = acetoacetate + NADH + H(+). It functions in the pathway amino-acid metabolism. The protein operates within siderophore biosynthesis. In terms of biological role, NAD(H)-dependent dehydrogenase/reductase with a preference for cyclic substrates. Catalyzes stereoselective conversion of 4-oxo-L-proline to cis-4-hydroxy-L-proline, likely a detoxification mechanism for ketoprolines. Mediates the formation of 2,5-dihydroxybenzoate (2,5-DHBA), a siderophore that chelates free cytoplasmic iron and associates with LCN2, thereby regulating iron transport and homeostasis while protecting cells against free radical-induced oxidative stress. The iron-siderophore complex is imported into mitochondria, providing an iron source for mitochondrial metabolic processes in particular heme synthesis. May act as a 3-hydroxybutyrate dehydrogenase. Functionally, (Microbial infection) May play a role in susceptibility to bacterial infection by providing an assimilable source of iron that is exploited by pathogenic bacteria. Host iron-siderophore complexes can be used by bacteria to promote their own growth and pathogenicity. In Mus musculus (Mouse), this protein is Dehydrogenase/reductase SDR family member 6.